We begin with the raw amino-acid sequence, 157 residues long: F-box protein SNE (157 aa).

The region spanning 24–70 (PVFSINDHHDVLVEILRRLDGSSLCSAACVCRLWSAVARNDSIWEEL) is the F-box domain.

Part of a SCF (ASK-cullin-F-box) protein ligase complex. Interacts directly with SKP1A and SKP1B. Highly expressed in flowers and at much lower level in seedlings, rosette leaves and green siliques.

It localises to the nucleus. The protein operates within protein modification; protein ubiquitination. In terms of biological role, essential component of a SCF-type E3 ligase complex that positively regulates the gibberellin signaling pathway. Upon gibberellin treatment, such complex probably mediates the ubiquitination and subsequent degradation of DELLA proteins (GAI, RGA and RGL2), some repressors of the gibberellin pathway, leading to activate the pathway. Can partially complement the absence of GID2/SLY1. The sequence is that of F-box protein SNE (SNE) from Arabidopsis thaliana (Mouse-ear cress).